The chain runs to 593 residues: UvrABC system protein C (593 aa).

Residues 17–94 (MEPGCYLMKD…IKQYQPRYNI (78 aa)) enclose the GIY-YIG domain. In terms of domain architecture, UVR spans 199–234 (KTILKSLEERMLTASESLDFERAKEYRDLIQHIQNL).

Belongs to the UvrC family. Interacts with UvrB in an incision complex.

It is found in the cytoplasm. In terms of biological role, the UvrABC repair system catalyzes the recognition and processing of DNA lesions. UvrC both incises the 5' and 3' sides of the lesion. The N-terminal half is responsible for the 3' incision and the C-terminal half is responsible for the 5' incision. The polypeptide is UvrABC system protein C (Staphylococcus aureus (strain Mu3 / ATCC 700698)).